A 724-amino-acid chain; its full sequence is Eukaryotic elongation factor 2 kinase (724 aa).

Ala2 carries the post-translational modification N-acetylalanine. The interval 11 to 35 (EGVDGGGSSGAGRHGDSDTDSDDDE) is disordered. Residues 13–22 (VDGGGSSGAG) show a composition bias toward gly residues. Phosphoserine is present on residues Ser18, Ser27, Ser70, and Ser73. Position 77 is a phosphoserine; by autocatalysis and TRPM7 (Ser77). The calmodulin-binding stretch occupies residues 80–93 (FKEAWKHAIEKAKH). An Alpha-type protein kinase domain is found at 115-325 (RYNAVTGEWL…ICQSMGLAPF (211 aa)). Phosphoserine is present on Ser242. 295 to 301 (GDGNLGV) lines the ATP pocket. Thr347 carries the phosphothreonine modification. Thr352 is modified (phosphothreonine; by autocatalysis). A disordered region spans residues 353–476 (EEKCGSPRIR…PESDEDSLGS (124 aa)). Position 358 is a phosphoserine; by MAPK13 and CDK1 (Ser358). The segment covering 364–376 (LSGSRPPLLLRLS) has biased composition (low complexity). 2 positions are modified to phosphoserine: Ser365 and Ser391. Over residues 385–403 (SDVTFDSLPSSPSSATPHS) the composition is skewed to polar residues. Phosphoserine; by AMPK is present on Ser397. Composition is skewed to basic and acidic residues over residues 421–435 (GPRDHDRMDNHRDSE) and 444–468 (SEKRSDLDDPEPREHGHSNGNRRPE). 5 positions are modified to phosphoserine: Ser434, Ser444, Ser469, Ser473, and Ser476. Ser499 carries the post-translational modification Phosphoserine; by PKA.

It belongs to the protein kinase superfamily. Alpha-type protein kinase family. As to quaternary structure, monomer or homodimer. Interacts with Calmodulin/CALM1; this interaction is strictly required for phosphorylation activity. Post-translationally, the N-terminus is blocked. In terms of processing, autophosphorylated at multiple residues, Thr-347 being the major site. Phosphorylated by AMP-activated protein kinase AMPK at Ser-397 leading to EEF2K activation and protein synthesis inhibition. Phosphorylated by TRPM7 at Ser-77 resulting in improved protein stability, higher EE2F phosphorylated and subsequently reduced rate of protein synthesis. Phosphorylation by other kinases such as CDK1 and MAPK13 at Ser-358 or RPS6KA1 and RPS6KB1 at Ser-365 instead decrease EEF2K activity and promote protein synthesis. In terms of tissue distribution, widely expressed, with high levels in reticulocytes and skeletal muscle.

The enzyme catalyses [translation elongation factor 2] + ATP = [translation elongation factor 2]-phosphate + ADP + H(+). Undergoes calcium/calmodulin-dependent intramolecular autophosphorylation, and this results in it becoming partially calcium/calmodulin-independent. In terms of biological role, threonine kinase that regulates protein synthesis by controlling the rate of peptide chain elongation. Upon activation by a variety of upstream kinases including AMPK or TRPM7, phosphorylates the elongation factor EEF2 at a single site, renders it unable to bind ribosomes and thus inactive. In turn, the rate of protein synthesis is reduced. The polypeptide is Eukaryotic elongation factor 2 kinase (Rattus norvegicus (Rat)).